The following is a 51-amino-acid chain: MAKSRCCGSQSRSRCCRPRQRCRRRRRRSCRARRRAMRCCRRRYRLRCRRY.

The protein belongs to the protamine P1 family. Testis.

It is found in the nucleus. The protein resides in the chromosome. Protamines substitute for histones in the chromatin of sperm during the haploid phase of spermatogenesis. They compact sperm DNA into a highly condensed, stable and inactive complex. This is Sperm protamine P1 (PRM1) from Nasalis larvatus (Proboscis monkey).